Reading from the N-terminus, the 163-residue chain is Lipoprotein signal peptidase (163 aa).

Transmembrane regions (helical) follow at residues 11-31 (ILIAVFVVIFDQVTKYIIATT), 64-84 (MTFFFIITIIILIALVYFFIN), and 88-108 (YNLFMQVAISLLFAGALGNFI). Residues Asp-118 and Asp-136 contribute to the active site. A helical membrane pass occupies residues 131 to 151 (IFNIADSSLTIGVILIIIALL).

This sequence belongs to the peptidase A8 family.

Its subcellular location is the cell membrane. It catalyses the reaction Release of signal peptides from bacterial membrane prolipoproteins. Hydrolyzes -Xaa-Yaa-Zaa-|-(S,diacylglyceryl)Cys-, in which Xaa is hydrophobic (preferably Leu), and Yaa (Ala or Ser) and Zaa (Gly or Ala) have small, neutral side chains.. It functions in the pathway protein modification; lipoprotein biosynthesis (signal peptide cleavage). Functionally, this protein specifically catalyzes the removal of signal peptides from prolipoproteins. This is Lipoprotein signal peptidase from Staphylococcus aureus (strain bovine RF122 / ET3-1).